The primary structure comprises 295 residues: Aspartate carbamoyltransferase catalytic subunit (295 aa).

Residues Arg-49 and Thr-50 each coordinate carbamoyl phosphate. Lys-77 is an L-aspartate binding site. 3 residues coordinate carbamoyl phosphate: Arg-99, His-127, and Gln-130. The L-aspartate site is built by Arg-161 and Arg-212. Carbamoyl phosphate contacts are provided by Gly-251 and Pro-252.

Belongs to the aspartate/ornithine carbamoyltransferase superfamily. ATCase family. As to quaternary structure, heterododecamer (2C3:3R2) of six catalytic PyrB chains organized as two trimers (C3), and six regulatory PyrI chains organized as three dimers (R2).

The catalysed reaction is carbamoyl phosphate + L-aspartate = N-carbamoyl-L-aspartate + phosphate + H(+). The protein operates within pyrimidine metabolism; UMP biosynthesis via de novo pathway; (S)-dihydroorotate from bicarbonate: step 2/3. In terms of biological role, catalyzes the condensation of carbamoyl phosphate and aspartate to form carbamoyl aspartate and inorganic phosphate, the committed step in the de novo pyrimidine nucleotide biosynthesis pathway. This Campylobacter jejuni subsp. doylei (strain ATCC BAA-1458 / RM4099 / 269.97) protein is Aspartate carbamoyltransferase catalytic subunit.